A 551-amino-acid polypeptide reads, in one-letter code: Cleavage and polyadenylation specificity factor subunit 6 (551 aa).

The tract at residues Met1–Gly213 is necessary for interaction with NXF1. One can recognise an RRM domain in the interval Ile81–Lys161. Residues Ile81 to Lys161 are necessary for interaction with NUDT21/CPSF5. Residues Ile81 to Lys161 form a necessary for nuclear paraspeckles localization region. Residue Thr157 is modified to Phosphothreonine. Over residues Met169–Met180 the composition is skewed to polar residues. Disordered regions lie at residues Met169–Glu411 and Leu477–Arg551. The GAR motif lies at Arg202–Arg206. Residues Phe207 to Gly219 show a composition bias toward low complexity. 3 stretches are compositionally biased toward pro residues: residues Pro220–Gly265, Gly285–Thr366, and Gly377–Pro388. Residues Asn358–Arg551 form a (Microbial infection) Binds to HIV-1 capsid protein p24 (CA) region. The segment covering Pro389–Thr404 has biased composition (basic and acidic residues). Residues Thr404 and Thr407 each carry the phosphothreonine modification. A sufficient for nuclear speckle localization region spans residues Thr404–Arg551. The interval Ala405–Arg551 is necessary for RNA-binding. The necessary for interaction with SRSF3, SRSF7 and TRA2B/SFRS10 stretch occupies residues Glu481–Arg551. The span at Ser489–Arg503 shows a compositional bias: basic and acidic residues. The arg/Ser-rich domain stretch occupies residues Arg490–Arg551. Residues Ser494, Ser500, Ser511, Ser513, and Ser525 each carry the phosphoserine modification. The segment covering Glu504 to Arg514 has biased composition (basic residues). The interval Lys510–Arg551 is sufficient for nuclear targeting. Residues Asp515–Arg551 are compositionally biased toward basic and acidic residues.

It belongs to the RRM CPSF6/7 family. As to quaternary structure, component of the cleavage factor Im (CFIm) complex which is a heterotetramer composed of two subunits of NUDT21/CPSF5 and two subunits of CPSF6 or CPSF7 or a heterodimer of CPSF6 and CPSF7. The cleavage factor Im (CFIm) complex associates with the CPSF and CSTF complexes to promote the assembly of the core mRNA 3'-processing machinery. Associates with the exon junction complex (EJC). Associates with the 80S ribosome particle. Interacts (via the RRM domain) with NUDT21/CPSF5; this interaction is direct and enhances binding to RNA. Interacts (via Arg/Ser-rich domain) with FIP1L1 (preferentially via unphosphorylated form and Arg/Glu/Asp-rich domain); this interaction mediates, at least in part, the interaction between the CFIm and CPSF complexes and may be inhibited by CPSF6 hyper-phosphorylation. Interacts (via N-terminus) with NXF1; this interaction is direct. Interacts with SRSF3. Interacts with SRSF7. Interacts with SNRNP70. Interacts with TRA2B/SFRS10. Interacts with UPF1. Interacts with UPF3B. Interacts with VIRMA. Interacts (via Arg/Ser-rich domain) with TNPO3; promoting nuclear import of CPSF6 independently of its phosphorylation status. Interacts with YTHDC1. (Microbial infection) Interacts (via C-terminus) with HIV-1 capsid protein p24 (CA). Phosphorylated. Phosphorylated in the Arg/Ser-rich domain by SRPK1, in vitro. Post-translationally, symmetrically dimethylated on arginine residues in the GAR motif by PRMT5 in a WDR77- and CLNS1A-dependent manner. Asymmetrically dimethylated on arginine residues in the GAR motif by PRMT1.

The protein resides in the nucleus. It localises to the nucleoplasm. Its subcellular location is the nucleus speckle. It is found in the cytoplasm. In terms of biological role, component of the cleavage factor Im (CFIm) complex that functions as an activator of the pre-mRNA 3'-end cleavage and polyadenylation processing required for the maturation of pre-mRNA into functional mRNAs. CFIm contributes to the recruitment of multiprotein complexes on specific sequences on the pre-mRNA 3'-end, so called cleavage and polyadenylation signals (pA signals). Most pre-mRNAs contain multiple pA signals, resulting in alternative cleavage and polyadenylation (APA) producing mRNAs with variable 3'-end formation. The CFIm complex acts as a key regulator of cleavage and polyadenylation site choice during APA through its binding to 5'-UGUA-3' elements localized in the 3'-untranslated region (UTR) for a huge number of pre-mRNAs. CPSF6 enhances NUDT21/CPSF5 binding to 5'-UGUA-3' elements localized upstream of pA signals and promotes RNA looping, and hence activates directly the mRNA 3'-processing machinery. Plays a role in mRNA export. Its function is as follows. (Microbial infection) Binds HIV-1 capsid-nucleocapsid (HIV-1 CA-NC) complexes and might thereby promote the integration of the virus in the nucleus of dividing cells (in vitro). The protein is Cleavage and polyadenylation specificity factor subunit 6 of Homo sapiens (Human).